Here is a 255-residue protein sequence, read N- to C-terminus: Glucanase inhibitor protein 4 (255 aa).

A signal peptide spans 1-21 (MKSITTASFALILFGVGAASA). Positions 29 to 255 (VLGGGAVPSG…ESLGMDQLGH (227 aa)) constitute a Peptidase S1 domain. An intrachain disulfide couples Cys-56 to Cys-72. Asn-90, Asn-105, Asn-110, and Asn-160 each carry an N-linked (GlcNAc...) asparagine glycan. 2 disulfides stabilise this stretch: Cys-180/Cys-192 and Cys-202/Cys-235.

This sequence belongs to the peptidase S1 family. Forms an apoplastic complex with host endoglucanases in tomato leaves during P.infestans infection.

The protein resides in the secreted. Functionally, secreted effector that suppresses host plant glucan elicitor-mediated defense responses. Targets host endoglucanases and inhibits the endoglucanase-mediated release of elicitor-active glucan oligosaccharides from P.infestans cell walls. The protein is Glucanase inhibitor protein 4 of Phytophthora infestans (Potato late blight agent).